Here is a 1035-residue protein sequence, read N- to C-terminus: MVVFVGRRLPALLGLFKKKGSAKAENDKHLSVGPGQGPGSAVDEHQDNVFFPSGRPPHLEELHTQAQEGLRSLQHQEKQKLNKGGWDHGDTQSIQSSRTGPDEDNISFCSQTTSYVAESSTAEDALSIRSEMIQRKGSTFRPHDSFPKSGKSGRRRRERRSTVLGLPQHVQKELGLRNEREAPGTPRAPGARDAVRIPTVDGRPRGTSGMGARVSLQALEAEAEAGAETEAMLQRHIDRVYRDDTFVGRSTGTRAPPLTRPMSLAVPGLTGGAGPAEPLSPAMSISPQATYLSKLIPHAVLPPTVDVVALGRCSLRTLSRCSLHSASPASVRSLGRFSSVSSPQPRSRHPSSSSDTWSHSQSSDTIVSDGSTLSSKGGSEGQPESSTASNSVVPPPQGGSGRGSPSGGSTAEASDTLSIRSSGQLSGRSVSLRKLKRPPPPPRRTHSLHQRGLAVPDGPLGLPPKPERKQQPQLPRPPTTGGSEGAGAAPCPPNPANSWVPGLSPGGSRRPPRSPERTLSPSSGYSSQSGTPTLPPKGLAGPPASPGKAQPPKPERVTSLRSPGASVSSSLTSLCSSSSDPAPSDRSGPQILTPLGDRFVIPPHPKVPAPFSPPPSKPRSPNPAAPALAAPAVVPGPVSTTDASPQSPPTPQTTLTPLQESPVISKDQSPPPSPPPSYHPPPPPTKKPEVVVEAPSASETAEEPLQDPNWPPPPPPAPEEQDLSMADFPPPEEAFFSVASPEPAGPSGSPELVSSPAASSSSATALQIQPPGSPDPPPAPPAPAPASSAPGHVAKLPQKEPVGCSKGGGPPREDVGAPLVTPSLLQMVRLRSVGAPGGAPTPALGPSAPQKPLRRALSGRASPVPAPSSGLHAAVRLKACSLAASEGLSSAQPNGPPEAEPRPPQSPASTASFIFSKGSRKLQLERPVSPETQADLQRNLVAELRSISEQRPPQAPKKSPKAPPPVARKPSVGVPPPASPSYPRAEPLTAPPTNGLPHTQDRTKRELAENGGVLQLVGPEEKMGLPGSDSQKELA.

V2 carries N-myristoyl glycine lipidation. Disordered stretches follow at residues 23–44, 76–105, and 133–162; these read KAEN…AVDE, QEKQ…DEDN, and IQRK…RRST. Basic and acidic residues predominate over residues 76–90; it reads QEKQKLNKGGWDHGD. S93, S138, S145, and S161 each carry phosphoserine. A Phosphothreonine modification is found at T162. Phosphoserine is present on S215. Residue R320 is modified to Asymmetric dimethylarginine. Phosphoserine is present on residues S322, S327, S330, S338, S339, S341, and S342. 2 disordered regions span residues 332–869 and 885–1035; these read RSLG…APSS and SEGL…KELA. Low complexity predominate over residues 338–365; that stretch reads SSVSSPQPRSRHPSSSSDTWSHSQSSDT. The segment covering 366–388 has biased composition (polar residues); sequence IVSDGSTLSSKGGSEGQPESSTA. Residues S400, S404, and S409 each carry the phosphoserine modification. Polar residues predominate over residues 411 to 429; it reads AEASDTLSIRSSGQLSGRS. Over residues 431-449 the composition is skewed to basic residues; that stretch reads SLRKLKRPPPPPRRTHSLH. Residues 517-532 are compositionally biased toward low complexity; sequence RTLSPSSGYSSQSGTP. Residue T531 is modified to Phosphothreonine. Residues 543–552 show a composition bias toward pro residues; sequence PASPGKAQPP. S545 carries the post-translational modification Phosphoserine. Residues 562–589 are compositionally biased toward low complexity; sequence SPGASVSSSLTSLCSSSSDPAPSDRSGP. At T593 the chain carries Phosphothreonine. Positions 602–624 are enriched in pro residues; it reads PPHPKVPAPFSPPPSKPRSPNPA. S612 is subject to Phosphoserine. Low complexity-rich tracts occupy residues 625–645 and 652–662; these read APAL…DASP and QTTLTPLQESP. Phosphoserine occurs at positions 669 and 673. Pro residues-rich tracts occupy residues 669–685 and 709–718; these read SPPP…PPPT and NWPPPPPPAP. Residues 737–765 are compositionally biased toward low complexity; the sequence is SVASPEPAGPSGSPELVSSPAASSSSATA. Positions 771 to 784 are enriched in pro residues; sequence PGSPDPPPAPPAPA. The segment covering 838-848 has biased composition (low complexity); sequence GAPTPALGPSA. A phosphoserine mark is found at S858, S862, and S868. The segment covering 894–906 has biased composition (pro residues); sequence NGPPEAEPRPPQS. A phosphoserine mark is found at S929, S959, S971, and S979. A compositionally biased stretch (pro residues) spans 961 to 980; sequence KAPPPVARKPSVGVPPPASP. Positions 999 to 1008 are enriched in basic and acidic residues; sequence TQDRTKRELA.

As to expression, expressed in lung.

In terms of biological role, able to directly activate the TNF-NFkappaB signaling pathway. This is NHS-like protein 3 from Homo sapiens (Human).